The chain runs to 121 residues: uncharacterized protein (121 aa).

Residues 1 to 23 (MNFSTVFQAIIAVLGLTTVTALA) form the signal peptide. Residues Asn68 and Asn84 are each glycosylated (N-linked (GlcNAc...) asparagine).

In terms of processing, N-glycosylated.

This is an uncharacterized protein from Saccharomyces cerevisiae (strain ATCC 204508 / S288c) (Baker's yeast).